A 418-amino-acid chain; its full sequence is MASLLGRSPSSILTCPRISSPSSTSSMSHLCFGPEKLSGRIQFNPKKNRSRYHVSVMNVATEINSVEQAKKIDSKESARPVYPFAAIVGQDEMKLCLLLNVIDPKIGGVMIMGDRGTGKSTTVRSLVDLLPEITVVSGDPYNSDPRDPECMGKEVREKVQKGEELSVIETKINMVDLPLGATEDRVCGTIDIEKALTEGVKAFEPGLLAKANRGILYVDEVNLLDDHLVDVLLDSAASGWNTVEREGISISHPARFILIGSGNPEEGELRPQLLDRFGMHAQVGTVRDAELRVKIVEERARFDSNPKEFRETYQEEQLKLQEQITTARSNLSAVQIDQDLKVKISKVCAELDVDGLRGDMVINRAARALAALQGRDQVTAEDVGIVIPNCLRHRLRKDPLESMDSGILVTEKFYEVFT.

The transit peptide at 1–55 directs the protein to the chloroplast; that stretch reads MASLLGRSPSSILTCPRISSPSSTSSMSHLCFGPEKLSGRIQFNPKKNRSRYHVS. V56 carries the post-translational modification N-acetylvaline. Disulfide bonds link C96–C187 and C348–C390. 113–120 is a binding site for ATP; sequence GDRGTGKS.

It belongs to the Mg-chelatase subunits D/I family. The magnesium chelatase complex is a heterotrimer consisting of subunits CHLI, CHLD and CHLH. As to expression, expressed in leaves.

The protein localises to the plastid. The protein resides in the chloroplast. The enzyme catalyses protoporphyrin IX + Mg(2+) + ATP + H2O = Mg-protoporphyrin IX + ADP + phosphate + 3 H(+). Its pathway is porphyrin-containing compound metabolism; chlorophyll biosynthesis. Its activity is regulated as follows. Redox regulation; active in reducing conditions, inactive in oxidizing conditions. Thioredoxins f and m mediate the reversible reductive activation of oxidized CHLI2. Functionally, involved in chlorophyll biosynthesis. Catalyzes the insertion of magnesium ion into protoporphyrin IX to yield Mg-protoporphyrin IX. The reaction takes place in two steps, with an ATP-dependent activation followed by an ATP-dependent chelation step. Possesses low affinity for ATP and may play a limited role in chlorophyll biosynthesis, and contributes to the assembly of the Mg-chelatase complex. The sequence is that of Magnesium-chelatase subunit ChlI-2, chloroplastic (CHLI2) from Arabidopsis thaliana (Mouse-ear cress).